Reading from the N-terminus, the 75-residue chain is MPHIDIKCFPRELDEQQKAALAADITDVIIRHLNSKDSSISIALQQIQPESWQAIWDAEIAPQMEALIKKPGYSM.

Pro-2 (proton acceptor; via imino nitrogen) is an active-site residue.

It belongs to the 4-oxalocrotonate tautomerase family. PptA subfamily. As to quaternary structure, homodimer.

Its subcellular location is the cytoplasm. The protein is Tautomerase PptA of Escherichia coli O139:H28 (strain E24377A / ETEC).